A 365-amino-acid polypeptide reads, in one-letter code: tRNA/tmRNA (uracil-C(5))-methyltransferase (365 aa).

S-adenosyl-L-methionine is bound by residues Gln-196, Tyr-224, Asn-229, Glu-245, and Asp-298. Cys-323 acts as the Nucleophile in catalysis. Residue Glu-357 is the Proton acceptor of the active site.

It belongs to the class I-like SAM-binding methyltransferase superfamily. RNA M5U methyltransferase family. TrmA subfamily.

It catalyses the reaction uridine(54) in tRNA + S-adenosyl-L-methionine = 5-methyluridine(54) in tRNA + S-adenosyl-L-homocysteine + H(+). The catalysed reaction is uridine(341) in tmRNA + S-adenosyl-L-methionine = 5-methyluridine(341) in tmRNA + S-adenosyl-L-homocysteine + H(+). Its function is as follows. Dual-specificity methyltransferase that catalyzes the formation of 5-methyluridine at position 54 (m5U54) in all tRNAs, and that of position 341 (m5U341) in tmRNA (transfer-mRNA). The sequence is that of tRNA/tmRNA (uracil-C(5))-methyltransferase from Nautilia profundicola (strain ATCC BAA-1463 / DSM 18972 / AmH).